Reading from the N-terminus, the 37-residue chain is MKVRPSVKPICEKCKVIKRKGKVMVICSNPKHKQRQG.

It belongs to the bacterial ribosomal protein bL36 family.

The polypeptide is Large ribosomal subunit protein bL36 (Staphylococcus saprophyticus subsp. saprophyticus (strain ATCC 15305 / DSM 20229 / NCIMB 8711 / NCTC 7292 / S-41)).